Consider the following 262-residue polypeptide: Shikimate dehydrogenase (NADP(+)) (262 aa).

Residues 15–17 (SRS) and T62 each bind shikimate. Catalysis depends on K66, which acts as the Proton acceptor. Residue E78 participates in NADP(+) binding. Positions 87 and 102 each coordinate shikimate. NADP(+) is bound by residues 126-130 (GAGGA), 150-155 (NRTLAR), and M214. Y216 serves as a coordination point for shikimate. G236 lines the NADP(+) pocket.

This sequence belongs to the shikimate dehydrogenase family. Homodimer.

The enzyme catalyses shikimate + NADP(+) = 3-dehydroshikimate + NADPH + H(+). It functions in the pathway metabolic intermediate biosynthesis; chorismate biosynthesis; chorismate from D-erythrose 4-phosphate and phosphoenolpyruvate: step 4/7. Functionally, involved in the biosynthesis of the chorismate, which leads to the biosynthesis of aromatic amino acids. Catalyzes the reversible NADPH linked reduction of 3-dehydroshikimate (DHSA) to yield shikimate (SA). In Acinetobacter baumannii (strain SDF), this protein is Shikimate dehydrogenase (NADP(+)).